The primary structure comprises 455 residues: Putative O-acetyltransferase SAT14 (455 aa).

Belongs to the lysine N-acyltransferase MbtK family.

The protein operates within mycotoxin biosynthesis. Putative O-acetyltransferase; part of the satratoxin SC2 cluster involved in the biosynthesis of satratoxins, trichothecene mycotoxins that are associated with human food poisonings. Satratoxins are suggested to be made by products of multiple gene clusters (SC1, SC2 and SC3) that encode 21 proteins in all, including polyketide synthases, acetyltransferases, and other enzymes expected to modify the trichothecene skeleton. SC1 encodes 10 proteins, SAT1 to SAT10. The largest are SAT8, which encodes a putative polyketide synthase (PKS) with a conventional non-reducing architecture, and SAT10, a putative protein containing four ankyrin repeats and thus may be involved in protein scaffolding. The putative short-chain reductase SAT3 may assist the PKS in some capacity. SAT6 contains a secretory lipase domain and acts probably as a trichothecene esterase. SAT5 encodes a putative acetyltransferase, and so, with SAT6, may affect endogenous protection from toxicity. The probable transcription factor SAT9 may regulate the expression of the SC1 cluster. SC2 encodes proteins SAT11 to SAT16, the largest of which encodes the putative reducing PKS SAT13. SAT11 is a cytochrome P450 monooxygenase, while SAT14 and SAT16 are probable acetyltransferases. The SC2 cluster may be regulated by the transcription factor SAT15. SC3 is a small cluster that encodes 5 proteins, SAT17 to SAT21. SAT21 is a putative MFS-type transporter which may have a role in exporting secondary metabolites. The four other proteins putatively encoded in SC3 include the taurine hydroxylase-like protein SAT17, the O-methyltransferase SAT18, the acetyltransferase SAT19, and the Cys6-type zinc finger SAT20, the latter being probably involved in regulation of SC3 expression. In Stachybotrys chartarum (strain CBS 109288 / IBT 7711) (Toxic black mold), this protein is Putative O-acetyltransferase SAT14.